The sequence spans 343 residues: Diterpene cyclase DtcycB (343 aa).

Mg(2+) contacts are provided by N219, S223, and E227.

Belongs to the terpene synthase family. Homodimer. Mg(2+) serves as cofactor.

The catalysed reaction is (2E,6E,10E)-geranylgeranyl diphosphate + H2O = (R)-nephthenol + diphosphate. The enzyme catalyses (2E,6E,10E)-geranylgeranyl diphosphate = (R)-cembrene A + diphosphate. It carries out the reaction (2E,6E,10E)-geranylgeranyl diphosphate + H2O = (1S,4E,8E,12E)-2,2,5,9,13-pentamethylcyclopentadeca-4,8,12-trien-1-ol + diphosphate. Diterpene cyclases that can form multiple diterpene products. In Streptomyces sp, this protein is Diterpene cyclase DtcycB.